A 932-amino-acid polypeptide reads, in one-letter code: Potassium voltage-gated channel subfamily KQT member 5 (932 aa).

At 1–125 (MPRHHAGGEE…YNVLERPRGW (125 aa)) the chain is on the cytoplasmic side. Phosphoserine is present on Ser-88. Residues 126-146 (AFIYHAFVFLLVFGCLILSVF) traverse the membrane as a helical segment. At 147–156 (STIPEHTKLA) the chain is on the extracellular side. Residues 157 to 177 (SSCLLILEFVMIVVFGLEFII) traverse the membrane as a helical segment. Topologically, residues 178-200 (RIWSAGCCCRYRGWQGRLRFARK) are cytoplasmic. The helical transmembrane segment at 201-221 (PFCVIDTIVLIASIAVVSAKT) threads the bilayer. The Extracellular portion of the chain corresponds to 222-229 (QGNIFATS). A helical; Voltage-sensor membrane pass occupies residues 230–252 (ALRSLRFLQILRMVRMDRRGGTW). 2 residues coordinate a 1,2-diacyl-sn-glycero-3-phospho-(1D-myo-inositol-4,5-bisphosphate): Arg-248 and Lys-264. The Cytoplasmic portion of the chain corresponds to 253 to 266 (KLLGSVVYAHSKEL). The chain crosses the membrane as a helical span at residues 267–287 (ITAWYIGFLVLIFSSFLVYLV). Over 288–298 (EKDANKEFSTY) the chain is Extracellular. The segment at residues 299–319 (ADALWWGTITLTTIGYGDKTP) is an intramembrane region (pore-forming). Topologically, residues 320 to 325 (LTWLGR) are extracellular. Residues 326–346 (LLSAGFALLGISFFALPAGIL) traverse the membrane as a helical segment. Residues 347–932 (GSGFALKVQE…ALSLPHVKLK (586 aa)) are Cytoplasmic-facing. A 1,2-diacyl-sn-glycero-3-phospho-(1D-myo-inositol-4,5-bisphosphate) is bound at residue Lys-361. Residues 370 to 378 (AANLIQCVW) are interaction with CALM. A disordered region spans residues 404–465 (SPTKKEQGEA…GSPTKVQKSW (62 aa)). Residues 431–440 (RGQSIKSRQA) show a composition bias toward polar residues. Phosphoserine is present on Ser-447. The interaction with CALM stretch occupies residues 521–528 (VIRAIRIM). Residues 655–678 (SDYQSPVDSKDLSGSAQNSGCLSR) form a disordered region. A Phosphoserine modification is found at Ser-831. Acidic residues predominate over residues 876-885 (VGPEETETDT). Positions 876–919 (VGPEETETDTFDAAPQPAREAAFASDSLRTGRSRSSQSICKAGE) are disordered. Positions 888 to 899 (AAPQPAREAAFA) are enriched in low complexity. Polar residues predominate over residues 902 to 914 (SLRTGRSRSSQSI).

It belongs to the potassium channel family. KQT (TC 1.A.1.15) subfamily. Kv7.5/KCNQ5 sub-subfamily. Homotetramer; forms a functional homotetrameric channel resulting in the expression of a small M-current. Heterotetramer with KCNQ3; forms heterotetrameric M-channel responsible for the native M-current. Heterotetramer with KCNQ1; forms a functional voltage-gated potassium channel. Interacts (via C-terminus) with calmodulin/CALM1; forms a heterooctameric structure (with 4:4 KCNQ1:CALM stoichiometry); the interaction is calcium-independent, constitutive and participates in the channel function. Strongly expressed in brain and skeletal muscle. In brain, expressed in cerebral cortex, occipital pole, frontal lobe and temporal lobe. Lower levels in hippocampus and putamen. Low to undetectable levels in medulla, cerebellum and thalamus.

It is found in the cell membrane. It catalyses the reaction K(+)(in) = K(+)(out). Its activity is regulated as follows. Phosphatidylinositol-4,5-bisphosphate (PIP2) is essential to activate KCNQ5 channel by inducing the coupling of the voltage-sensing domain (VSD) and the pore-forming domain (PD). Calcium suppresses KCNQ5 channel current through calcium-bound CALM C-terminus. Therefore CALM acts as calcium sensor that controls channel activity. Activated by niflumic acid and the anticonvulsant retigabine. Inhibited by barium, linopirdine, XE991 and tetraethylammonium (as homomer). Insensitive to tetraethylammonium in KCNQ3-KCNQ5 heteromers. Pore-forming subunit of the voltage-gated potassium (Kv) channel broadly expressed in brain and involved in the regulation of neuronal excitability. Associates with KCNQ3/Kv7.3 pore-forming subunit to form a potassium channel which contributes to M-type current, a slowly activating and deactivating potassium conductance which plays a critical role in determining the subthreshold electrical excitability of neurons. Contributes, with other potassium channels, to the molecular diversity of a heterogeneous population of M-channels, varying in kinetic and pharmacological properties, which underlie this physiologically important current. Also forms a functional channel with KCNQ1/Kv7.1 subunit that may contribute to vasoconstriction and hypertension. Channel may be selectively permeable in vitro to other cations besides potassium, in decreasing order of affinity K(+) = Rb(+) &gt; Cs(+) &gt; Na(+). Similar to the native M-channel, KCNQ3-KCNQ5 potassium channel is suppressed by activation of the muscarinic acetylcholine receptor CHRM1. The chain is Potassium voltage-gated channel subfamily KQT member 5 from Homo sapiens (Human).